We begin with the raw amino-acid sequence, 571 residues long: External alternative NAD(P)H-ubiquinone oxidoreductase B1, mitochondrial (571 aa).

Residues methionine 1–alanine 35 constitute a mitochondrion transit peptide. Lysine 51 to glutamine 81 serves as a coordination point for FAD. Leucine 215 to leucine 251 contributes to the NAD(+) binding site. In terms of domain architecture, EF-hand spans lysine 372 to arginine 407. Residues aspartate 385, aspartate 387, serine 389, threonine 391, and glutamate 396 each contribute to the Ca(2+) site. A Microbody targeting signal motif is present at residues tyrosine 562–isoleucine 571.

This sequence belongs to the NADH dehydrogenase family. FAD serves as cofactor. Expressed in seedlings, roots, cotyledons, leaves, stems, buds and flowers.

Its subcellular location is the mitochondrion inner membrane. It is found in the peroxisome. The enzyme catalyses a quinone + NADH + H(+) = a quinol + NAD(+). The catalysed reaction is a ubiquinone + NADH + H(+) = a ubiquinol + NAD(+). With respect to regulation, activity is calcium-dependent with a more pronounced effect at higher pH. In terms of biological role, alternative NADH-ubiquinone oxidoreductase which catalyzes the oxidation of mitochondrial NADH does not translocate protons across the inner mitochondrial membrane. Calcium-dependent NAD(P)H dehydrogenase. Binds calcium ions. The sequence is that of External alternative NAD(P)H-ubiquinone oxidoreductase B1, mitochondrial (NDB1) from Arabidopsis thaliana (Mouse-ear cress).